The sequence spans 118 residues: NADH-quinone oxidoreductase subunit A (118 aa).

3 helical membrane passes run 6–26 (LPVLIFLLVALVVGVAPLLMG), 64–84 (AILFILFDLEIAFLFPWAVVF), and 87–107 (IGMTGFLAMMLFLAILVVGFI).

The protein belongs to the complex I subunit 3 family. NDH-1 is composed of 14 different subunits. Subunits NuoA, H, J, K, L, M, N constitute the membrane sector of the complex.

The protein localises to the cell inner membrane. It carries out the reaction a quinone + NADH + 5 H(+)(in) = a quinol + NAD(+) + 4 H(+)(out). In terms of biological role, NDH-1 shuttles electrons from NADH, via FMN and iron-sulfur (Fe-S) centers, to quinones in the respiratory chain. The immediate electron acceptor for the enzyme in this species is believed to be ubiquinone. Couples the redox reaction to proton translocation (for every two electrons transferred, four hydrogen ions are translocated across the cytoplasmic membrane), and thus conserves the redox energy in a proton gradient. The protein is NADH-quinone oxidoreductase subunit A of Acidithiobacillus ferrooxidans (strain ATCC 53993 / BNL-5-31) (Leptospirillum ferrooxidans (ATCC 53993)).